A 325-amino-acid chain; its full sequence is Nod factor export ATP-binding protein I (325 aa).

One can recognise an ABC transporter domain in the interval Leu-27–Tyr-257. Gly-59–Thr-66 serves as a coordination point for ATP.

Belongs to the ABC transporter superfamily. Lipooligosaccharide exporter (TC 3.A.1.102) family. The complex is composed of two ATP-binding proteins (NodI) and two transmembrane proteins (NodJ).

Its subcellular location is the cell inner membrane. In terms of biological role, part of the ABC transporter complex NodIJ involved in the export of the nodulation factors (Nod factors), the bacterial signal molecules that induce symbiosis and subsequent nodulation induction. Nod factors are LCO (lipo-chitin oligosaccharide), a modified beta-1,4-linked N-acetylglucosamine oligosaccharide. This subunit is responsible for energy coupling to the transport system. The protein is Nod factor export ATP-binding protein I of Cupriavidus pinatubonensis (strain JMP 134 / LMG 1197) (Cupriavidus necator (strain JMP 134)).